A 181-amino-acid polypeptide reads, in one-letter code: Ribosome maturation factor RimM (181 aa).

One can recognise a PRC barrel domain in the interval 99–172 (EDEFYQVDLI…FLIVDPMAAG (74 aa)).

This sequence belongs to the RimM family. Binds ribosomal protein uS19.

It localises to the cytoplasm. An accessory protein needed during the final step in the assembly of 30S ribosomal subunit, possibly for assembly of the head region. Essential for efficient processing of 16S rRNA. May be needed both before and after RbfA during the maturation of 16S rRNA. It has affinity for free ribosomal 30S subunits but not for 70S ribosomes. The protein is Ribosome maturation factor RimM of Bartonella tribocorum (strain CIP 105476 / IBS 506).